We begin with the raw amino-acid sequence, 254 residues long: tRNA uridine(34) hydroxylase (254 aa).

The 95-residue stretch at 123–217 (QDPNVILLDT…YLESIPESES (95 aa)) folds into the Rhodanese domain. C177 (cysteine persulfide intermediate) is an active-site residue.

The protein belongs to the TrhO family.

It carries out the reaction uridine(34) in tRNA + AH2 + O2 = 5-hydroxyuridine(34) in tRNA + A + H2O. In terms of biological role, catalyzes oxygen-dependent 5-hydroxyuridine (ho5U) modification at position 34 in tRNAs. The protein is tRNA uridine(34) hydroxylase of Legionella pneumophila (strain Corby).